An 87-amino-acid chain; its full sequence is Bradykinin-potentiating peptide NDBP12 (87 aa).

Residues 1 to 22 (MNKRVLLVIFFVTLLVADEVNS) form the signal peptide. The span at 64-75 (PAEAPAPAAAAP) shows a compositional bias: low complexity. The tract at residues 64–87 (PAEAPAPAAAAPEEPPVEQRRRRR) is disordered.

Belongs to the non-disulfide-bridged peptide (NDBP) superfamily. Long chain multifunctional peptide (group 2) family. Expressed by the venom gland.

The protein localises to the secreted. Functionally, inhibits angiotensin-converting enzyme (ACE), but does not serve as substrate for the enzyme. Potentiates bradykinin (BK) on the isolated guinea pig ileum as well as the isolated rat uterus for contraction. Also potentiates in vivo the depressor effect of BK on arterial blood pressure in the normotensive anesthetized rat. This is Bradykinin-potentiating peptide NDBP12 from Lychas mucronatus (Chinese swimming scorpion).